A 481-amino-acid chain; its full sequence is MEKESQENSTRPDASSTVFSSSKSTCASPSYLKEAGDLISRLPDDILQLILSYLPTRLAIKTSVLSRRWRHVWSDTWSLSFHRDRPDAPCINRILDRYRAPKMMSFRICSCCRAACISRPDTHADIDSWINFAMSRNVENLSLYLDEDKYDIPEFLYINSSLKQLYLDFGCKKDFISLNPKCSVSWTSLKNLSLYHCNISDESIAIILSGCPILESLLLFFCKKLKVLDLSKSPRLITLEITRRCRMEPTQLVAPHIRCLRLINSEKPCALVDVSSLSQAELDITAYAIVDNKLEADFHQTMVVKMLEKCQNVEKLTLGANFLKMLSLAELRGVSFPKLKAKALILETMISRYVIHGIVKVLQNSPDLKKLTIHPMGSAGSYPIPEEHIDIYLDSHGLNWDPSWSSEFKNTSRRNVESKQVASFLQLVLKTISTLELIVARLEGYIKGRRFVELRQMVPMLPRNNDVSIVLSSRRKRFRVT.

A disordered region spans residues 1-28 (MEKESQENSTRPDASSTVFSSSKSTCAS). Residues 14–28 (ASSTVFSSSKSTCAS) show a composition bias toward low complexity. One can recognise an F-box domain in the interval 36-84 (GDLISRLPDDILQLILSYLPTRLAIKTSVLSRRWRHVWSDTWSLSFHRD). 5 LRR repeats span residues 118-145 (SRPD…SLYL), 196-221 (HCNI…LLFF), 295-320 (EADF…TLGA), 350-375 (ISRY…TIHP), and 413-439 (RRNV…ELIV).

The polypeptide is F-box/LRR-repeat protein At3g03360 (Arabidopsis thaliana (Mouse-ear cress)).